Consider the following 139-residue polypeptide: Large ribosomal subunit protein uL22 (139 aa).

Residues 1–21 (MTAPTPEFRNKKQRKQQVKLR) are disordered.

The protein belongs to the universal ribosomal protein uL22 family. Part of the 50S ribosomal subunit.

This protein binds specifically to 23S rRNA; its binding is stimulated by other ribosomal proteins, e.g. L4, L17, and L20. It is important during the early stages of 50S assembly. It makes multiple contacts with different domains of the 23S rRNA in the assembled 50S subunit and ribosome. In terms of biological role, the globular domain of the protein is located near the polypeptide exit tunnel on the outside of the subunit, while an extended beta-hairpin is found that lines the wall of the exit tunnel in the center of the 70S ribosome. This is Large ribosomal subunit protein uL22 from Deinococcus deserti (strain DSM 17065 / CIP 109153 / LMG 22923 / VCD115).